The chain runs to 288 residues: 4-hydroxy-tetrahydrodipicolinate synthase (288 aa).

A pyruvate-binding site is contributed by Thr-47. Tyr-136 acts as the Proton donor/acceptor in catalysis. Lys-164 functions as the Schiff-base intermediate with substrate in the catalytic mechanism. Ile-204 provides a ligand contact to pyruvate.

It belongs to the DapA family. Homotetramer; dimer of dimers.

It is found in the cytoplasm. It carries out the reaction L-aspartate 4-semialdehyde + pyruvate = (2S,4S)-4-hydroxy-2,3,4,5-tetrahydrodipicolinate + H2O + H(+). Its pathway is amino-acid biosynthesis; L-lysine biosynthesis via DAP pathway; (S)-tetrahydrodipicolinate from L-aspartate: step 3/4. In terms of biological role, catalyzes the condensation of (S)-aspartate-beta-semialdehyde [(S)-ASA] and pyruvate to 4-hydroxy-tetrahydrodipicolinate (HTPA). In Leuconostoc mesenteroides subsp. mesenteroides (strain ATCC 8293 / DSM 20343 / BCRC 11652 / CCM 1803 / JCM 6124 / NCDO 523 / NBRC 100496 / NCIMB 8023 / NCTC 12954 / NRRL B-1118 / 37Y), this protein is 4-hydroxy-tetrahydrodipicolinate synthase.